The primary structure comprises 477 residues: Tryptophan biosynthesis protein TrpCF (477 aa).

Residues 13 to 275 (SATVLQKIVL…NAVRSVIFGE (263 aa)) are indole-3-glycerol phosphate synthase. Residues 276–477 (NKVCGLTRAQ…KVRLVFNNIY (202 aa)) are N-(5'-phosphoribosyl)anthranilate isomerase.

The protein in the N-terminal section; belongs to the TrpC family. In the C-terminal section; belongs to the TrpF family. As to quaternary structure, monomer.

The enzyme catalyses N-(5-phospho-beta-D-ribosyl)anthranilate = 1-(2-carboxyphenylamino)-1-deoxy-D-ribulose 5-phosphate. The catalysed reaction is 1-(2-carboxyphenylamino)-1-deoxy-D-ribulose 5-phosphate + H(+) = (1S,2R)-1-C-(indol-3-yl)glycerol 3-phosphate + CO2 + H2O. It participates in amino-acid biosynthesis; L-tryptophan biosynthesis; L-tryptophan from chorismate: step 3/5. Its pathway is amino-acid biosynthesis; L-tryptophan biosynthesis; L-tryptophan from chorismate: step 4/5. Its function is as follows. Bifunctional enzyme that catalyzes two sequential steps of tryptophan biosynthetic pathway. The first reaction is catalyzed by the isomerase, coded by the TrpF domain; the second reaction is catalyzed by the synthase, coded by the TrpC domain. This chain is Tryptophan biosynthesis protein TrpCF (trpC), found in Haemophilus influenzae (strain ATCC 51907 / DSM 11121 / KW20 / Rd).